The following is a 284-amino-acid chain: CBY1-interacting BAR domain-containing protein 1-A (284 aa).

Residues 1–48 (MSQTPEARARDNQTRQIQESVNNVEKHFGELCQIFAGYVRKTARLRDK) constitute a mitochondrion transit peptide. Residues 11–221 (DNQTRQIQES…DIDEEEDLEV (211 aa)) are BAR-like. Coiled coils occupy residues 142-184 (RQII…IKKL) and 260-284 (NRQKNRIEDEDEEEEDDENSTEDEN). The segment covering 242-261 (SRTGSTSRGPSVISQPPGNR) has biased composition (polar residues). The segment at 242–284 (SRTGSTSRGPSVISQPPGNRQKNRIEDEDEEEEDDENSTEDEN) is disordered. The segment covering 267-284 (EDEDEEEEDDENSTEDEN) has biased composition (acidic residues).

It belongs to the CIBAR family.

The protein localises to the cytoplasm. It localises to the cytoskeleton. The protein resides in the microtubule organizing center. It is found in the centrosome. Its subcellular location is the centriole. The protein localises to the nucleus. It localises to the mitochondrion inner membrane. The protein resides in the cell projection. It is found in the cilium. Its subcellular location is the flagellum. Functionally, plays a critical role in regulating mitochondrial ultrastructure and function by maintaining the integrity of mitochondrial morphology, particularly the organization of cristae. Plays a crucial role in ciliogenesis. Plays a key role in the correct positioning of the annulus, a septin-based ring structure in the sperm flagellum, serving both as a physical barrier and a membrane diffusion barrier that separates the midpiece (MP) from the principal piece (PP). The chain is CBY1-interacting BAR domain-containing protein 1-A from Xenopus laevis (African clawed frog).